The sequence spans 219 residues: Cytidylate kinase (219 aa).

Position 21–29 (21–29 (GPAASGKGT)) interacts with ATP.

Belongs to the cytidylate kinase family. Type 1 subfamily.

The protein resides in the cytoplasm. The enzyme catalyses CMP + ATP = CDP + ADP. It carries out the reaction dCMP + ATP = dCDP + ADP. This is Cytidylate kinase from Rickettsia rickettsii (strain Iowa).